The following is an 84-amino-acid chain: Acyl-CoA-binding protein (84 aa).

In terms of domain architecture, ACB spans 1–84 (MTTFEEAAQK…LYEQLATKYA (84 aa)). An acyl-CoA-binding positions include lysine 12, 27-31 (YGLYK), lysine 53, and tyrosine 72.

This sequence belongs to the ACBP family. In terms of assembly, interacts with dhkA.

Functionally, binds to acyl-CoA. Processed into the SDF-2 (spore differentiation factor 2) a peptide which triggers sporulation. SDF-2 appears to stimulate prestalk cells to release additional SDF-2 by acting through a signal transduction pathway that also involves dhkA, regA and PKA. Induces encapsulation of prespore cells in a dhkA-dependent manner. GABA induces the release of acbA from prespore cells and induces the exposure of tagC on the surface of prestalk cells where it can convert acbA to SDF-2. Glutamate acts as a competitive inhibitor and is also able to inhibit induction of sporulation by SDF-2. This Dictyostelium discoideum (Social amoeba) protein is Acyl-CoA-binding protein (acbA).